Consider the following 334-residue polypeptide: DNA-directed RNA polymerase subunit alpha (334 aa).

An alpha N-terminal domain (alpha-NTD) region spans residues 1 to 234; the sequence is MQRSVHELLT…QQLAVFVDFD (234 aa). The segment at 248–334 is alpha C-terminal domain (alpha-CTD); that stretch reads IDPILLRPVD…LRGDDRVLGG (87 aa).

It belongs to the RNA polymerase alpha chain family. Homodimer. The RNAP catalytic core consists of 2 alpha, 1 beta, 1 beta' and 1 omega subunit. When a sigma factor is associated with the core the holoenzyme is formed, which can initiate transcription.

The catalysed reaction is RNA(n) + a ribonucleoside 5'-triphosphate = RNA(n+1) + diphosphate. Its function is as follows. DNA-dependent RNA polymerase catalyzes the transcription of DNA into RNA using the four ribonucleoside triphosphates as substrates. This Marinobacter nauticus (strain ATCC 700491 / DSM 11845 / VT8) (Marinobacter aquaeolei) protein is DNA-directed RNA polymerase subunit alpha.